The following is a 430-amino-acid chain: Argininosuccinate lyase (430 aa).

It belongs to the lyase 1 family. Argininosuccinate lyase subfamily.

It is found in the cytoplasm. It carries out the reaction 2-(N(omega)-L-arginino)succinate = fumarate + L-arginine. The protein operates within amino-acid biosynthesis; L-arginine biosynthesis; L-arginine from L-ornithine and carbamoyl phosphate: step 3/3. The chain is Argininosuccinate lyase from Sorangium cellulosum (strain So ce56) (Polyangium cellulosum (strain So ce56)).